A 178-amino-acid polypeptide reads, in one-letter code: Cytochrome b6-f complex subunit 4 (178 aa).

The next 3 membrane-spanning stretches (helical) occupy residues 36–56 (LSYI…GLAV), 95–115 (LLGV…PFLE), and 131–151 (TVSL…ALPI).

It belongs to the cytochrome b family. PetD subfamily. As to quaternary structure, the 4 large subunits of the cytochrome b6-f complex are cytochrome b6, subunit IV (17 kDa polypeptide, petD), cytochrome f and the Rieske protein, while the 4 small subunits are petG, petL, petM and petN. The complex functions as a dimer.

The protein localises to the plastid. Its subcellular location is the chloroplast thylakoid membrane. Component of the cytochrome b6-f complex, which mediates electron transfer between photosystem II (PSII) and photosystem I (PSI), cyclic electron flow around PSI, and state transitions. The sequence is that of Cytochrome b6-f complex subunit 4 from Picea abies (Norway spruce).